The following is a 512-amino-acid chain: Histidine ammonia-lyase (512 aa).

The segment at residues 143 to 145 is a cross-link (5-imidazolinone (Ala-Gly)); sequence ASG. Position 144 is a 2,3-didehydroalanine (Ser) (Ser144).

The protein belongs to the PAL/histidase family. In terms of processing, contains an active site 4-methylidene-imidazol-5-one (MIO), which is formed autocatalytically by cyclization and dehydration of residues Ala-Ser-Gly.

The protein resides in the cytoplasm. The catalysed reaction is L-histidine = trans-urocanate + NH4(+). It participates in amino-acid degradation; L-histidine degradation into L-glutamate; N-formimidoyl-L-glutamate from L-histidine: step 1/3. In Ruegeria pomeroyi (strain ATCC 700808 / DSM 15171 / DSS-3) (Silicibacter pomeroyi), this protein is Histidine ammonia-lyase.